A 90-amino-acid polypeptide reads, in one-letter code: uncharacterized protein (90 aa).

This sequence to E.coli RlpA.

This is an uncharacterized protein from Synechocystis sp. (strain ATCC 27184 / PCC 6803 / Kazusa).